A 299-amino-acid chain; its full sequence is DNA repair protein RecO (299 aa).

The disordered stretch occupies residues 1 to 62 (MTLNSDADPD…GRRAPRTPAS (62 aa)). A compositionally biased stretch (low complexity) spans 25–41 (ASKPARSTRKSSSAKSA).

This sequence belongs to the RecO family.

Involved in DNA repair and RecF pathway recombination. The chain is DNA repair protein RecO from Paraburkholderia xenovorans (strain LB400).